The primary structure comprises 319 residues: Ferrochelatase (319 aa).

Positions 194 and 275 each coordinate Fe cation.

The protein belongs to the ferrochelatase family.

The protein resides in the cytoplasm. The enzyme catalyses heme b + 2 H(+) = protoporphyrin IX + Fe(2+). It participates in porphyrin-containing compound metabolism; protoheme biosynthesis; protoheme from protoporphyrin-IX: step 1/1. Its function is as follows. Catalyzes the ferrous insertion into protoporphyrin IX. The chain is Ferrochelatase from Vibrio vulnificus (strain YJ016).